The primary structure comprises 109 residues: uncharacterized protein (109 aa).

This is an uncharacterized protein from Mycoplasma pneumoniae (strain ATCC 29342 / M129 / Subtype 1) (Mycoplasmoides pneumoniae).